Consider the following 440-residue polypeptide: GTPase Der (440 aa).

EngA-type G domains are found at residues 3–167 (PIIA…PYDR) and 176–351 (TRIA…EQYC). Residues 9-16 (GRPNVGKS), 56-60 (DTGGF), 119-122 (NKVD), 182-189 (GRPNVGKS), 229-233 (DTAGI), and 294-297 (NKWD) each bind GTP. One can recognise a KH-like domain in the interval 352 to 436 (KRVTTGELNR…PLKLIFRGRD (85 aa)).

The protein belongs to the TRAFAC class TrmE-Era-EngA-EngB-Septin-like GTPase superfamily. EngA (Der) GTPase family. In terms of assembly, associates with the 50S ribosomal subunit.

Its function is as follows. GTPase that plays an essential role in the late steps of ribosome biogenesis. The polypeptide is GTPase Der (Geobacter sp. (strain M21)).